The chain runs to 299 residues: Prohibitin-2 (299 aa).

Position 2 is an N-acetylalanine (A2). Residues M19–A49 form a necessary for transcriptional repression region. Position 128 is a phosphotyrosine (Y128). At K147 the chain carries N6-acetyllysine. Positions A150 to D174 are necessary for transcriptional repression. S151 bears the Phosphoserine mark. Residues S190–L238 adopt a coiled-coil conformation. N6-acetyllysine occurs at positions 200, 250, and 262.

The protein belongs to the prohibitin family. As to quaternary structure, the mitochondrial prohibitin complex consists of two subunits (PHB1 and PHB2), assembled into a membrane-associated ring-shaped supercomplex of approximately 1 mDa. Interacts with ESR1, HDAC1 and HDAC5. Interacts with ZNF703. Interacts with STOML2. Interacts with ARFGEF3. Interacts with SPHK2. Interacts with COX4I1; the interaction associates PHB2 with COX. Interacts with MAP1LC3B (membrane-bound form LC3-II); the interaction is direct and upon mitochondrial depolarization and proteasome-dependent outer membrane rupture. Interacts with IGFBP6 (via C-terminal domain). Interacts with CLPB. Interacts with CD86 (via cytoplasmic domain); the interactions increases after priming with CD40. Interacts with AFG3L2. Interacts with DNAJC19. Interacts with AKT2; this interaction may be important for myogenic differentiation. In terms of processing, phosphorylated. Tyrosine phosphorylation is indirectly stimulated by IGFBP6.

The protein localises to the mitochondrion inner membrane. The protein resides in the cytoplasm. It localises to the nucleus. It is found in the cell membrane. In terms of biological role, protein with pleiotropic attributes mediated in a cell-compartment- and tissue-specific manner, which include the plasma membrane-associated cell signaling functions, mitochondrial chaperone, and transcriptional co-regulator of transcription factors and sex steroid hormones in the nucleus. Functionally, in the mitochondria, together with PHB, forms large ring complexes (prohibitin complexes) in the inner mitochondrial membrane (IMM) and functions as a chaperone protein that stabilizes mitochondrial respiratory enzymes and maintains mitochondrial integrity in the IMM, which is required for mitochondrial morphogenesis, neuronal survival, and normal lifespan. The prohibitin complex, with DNAJC19, regulates cardiolipin remodeling and the protein turnover of OMA1 in a cardiolipin-binding manner. Also regulates cytochrome-c oxidase assembly (COX) and mitochondrial respiration. Binding to sphingoid 1-phosphate (SPP) modulates its regulator activity. Has a key role of mitophagy receptor involved in targeting mitochondria for autophagic degradation. Involved in mitochondrial-mediated antiviral innate immunity, activates RIG-I-mediated signal transduction and production of IFNB1 and pro-inflammatory cytokine IL6. In the nucleus, serves as transcriptional co-regulator. Acts as a mediator of transcriptional repression by nuclear hormone receptors via recruitment of histone deacetylases. Functions as an estrogen receptor (ER)-selective coregulator that potentiates the inhibitory activities of antiestrogens and represses the activity of estrogens. Competes with NCOA1 for modulation of ER transcriptional activity. Its function is as follows. In the plasma membrane, is involved in IGFBP6-induced cell migration. Cooperates with CD86 to mediate CD86-signaling in B lymphocytes that regulates the level of IgG1 produced through the activation of distal signaling intermediates. Upon CD40 engagement, required to activate NF-kappa-B signaling pathway via phospholipase C and protein kinase C activation. The polypeptide is Prohibitin-2 (PHB2) (Bos taurus (Bovine)).